Consider the following 174-residue polypeptide: Endoribonuclease YbeY (174 aa).

3 residues coordinate Zn(2+): His124, His128, and His134.

The protein belongs to the endoribonuclease YbeY family. It depends on Zn(2+) as a cofactor.

The protein resides in the cytoplasm. In terms of biological role, single strand-specific metallo-endoribonuclease involved in late-stage 70S ribosome quality control and in maturation of the 3' terminus of the 16S rRNA. The protein is Endoribonuclease YbeY of Synechococcus elongatus (strain ATCC 33912 / PCC 7942 / FACHB-805) (Anacystis nidulans R2).